A 488-amino-acid chain; its full sequence is UDP-N-acetylmuramoyl-L-alanyl-D-glutamate--2,6-diaminopimelate ligase (488 aa).

Ser-29 lines the UDP-N-acetyl-alpha-D-muramoyl-L-alanyl-D-glutamate pocket. 108 to 114 (GTSGKTS) is an ATP binding site. UDP-N-acetyl-alpha-D-muramoyl-L-alanyl-D-glutamate contacts are provided by residues 150 to 151 (TT), Ser-177, Gln-183, and Arg-185. An N6-carboxylysine modification is found at Lys-217. Residues Arg-381, 405–408 (DNPR), Gly-453, and Glu-457 contribute to the meso-2,6-diaminopimelate site. A Meso-diaminopimelate recognition motif motif is present at residues 405-408 (DNPR).

This sequence belongs to the MurCDEF family. MurE subfamily. The cofactor is Mg(2+). Carboxylation is probably crucial for Mg(2+) binding and, consequently, for the gamma-phosphate positioning of ATP.

It localises to the cytoplasm. The catalysed reaction is UDP-N-acetyl-alpha-D-muramoyl-L-alanyl-D-glutamate + meso-2,6-diaminopimelate + ATP = UDP-N-acetyl-alpha-D-muramoyl-L-alanyl-gamma-D-glutamyl-meso-2,6-diaminopimelate + ADP + phosphate + H(+). Its pathway is cell wall biogenesis; peptidoglycan biosynthesis. In terms of biological role, catalyzes the addition of meso-diaminopimelic acid to the nucleotide precursor UDP-N-acetylmuramoyl-L-alanyl-D-glutamate (UMAG) in the biosynthesis of bacterial cell-wall peptidoglycan. The protein is UDP-N-acetylmuramoyl-L-alanyl-D-glutamate--2,6-diaminopimelate ligase of Brucella melitensis biotype 1 (strain ATCC 23456 / CCUG 17765 / NCTC 10094 / 16M).